The following is a 387-amino-acid chain: Phosphoglycerate kinase (387 aa).

Substrate-binding positions include Asp21–Asn23, Arg36, His59–Arg62, Arg113, and Arg146. ATP is bound by residues Lys197, Glu314, and Gly340 to Thr343.

This sequence belongs to the phosphoglycerate kinase family. In terms of assembly, monomer.

Its subcellular location is the cytoplasm. The enzyme catalyses (2R)-3-phosphoglycerate + ATP = (2R)-3-phospho-glyceroyl phosphate + ADP. The protein operates within carbohydrate degradation; glycolysis; pyruvate from D-glyceraldehyde 3-phosphate: step 2/5. This is Phosphoglycerate kinase from Pectobacterium carotovorum subsp. carotovorum (strain PC1).